We begin with the raw amino-acid sequence, 124 residues long: Small ribosomal subunit protein uS13 (124 aa).

A compositionally biased stretch (basic residues) spans 103-117 (KCNARTRKGPRKTVA). The segment at 103–124 (KCNARTRKGPRKTVANKKIETK) is disordered.

The protein belongs to the universal ribosomal protein uS13 family. As to quaternary structure, part of the 30S ribosomal subunit. Forms a loose heterodimer with protein S19. Forms two bridges to the 50S subunit in the 70S ribosome.

Located at the top of the head of the 30S subunit, it contacts several helices of the 16S rRNA. In the 70S ribosome it contacts the 23S rRNA (bridge B1a) and protein L5 of the 50S subunit (bridge B1b), connecting the 2 subunits; these bridges are implicated in subunit movement. Contacts the tRNAs in the A and P-sites. This chain is Small ribosomal subunit protein uS13, found in Malacoplasma penetrans (strain HF-2) (Mycoplasma penetrans).